Consider the following 143-residue polypeptide: uncharacterized protein (143 aa).

In terms of domain architecture, HTH marR-type spans 5–137 (DARLASDLSL…LRSAADLMLA (133 aa)). The segment at residues 51–74 (PGALAIRERVRPPSMTRVIASLAD) is a DNA-binding region (H-T-H motif).

In terms of assembly, homodimer.

This is an uncharacterized protein from Mycobacterium bovis (strain ATCC BAA-935 / AF2122/97).